The sequence spans 456 residues: MELNSLTAISPIDGRYSNSTKLLRNIFSEFGFLKYRLYVEIQWLKKLINMHQILEIKKVEKTDILFLDNIFETFNEEDAISVKNIEKETNHDVKALEYFLRKKLSQSKKLSPFLEFVHFLCTSEDINNIAYALMIKNARDEIILPLWKKIINFLKNASFQYRNNSLLSLTHGQPATPSTMGKEMVNFYYRMQRQYHKLKKIEILGKINGTTGNYNAHLVAYPKVNWHAVSKEFITSLGIFWNPYTTQIEPHDYIAELFGCVSLFNNILIDSNRDIWGYISLNYFKQKLIDQEIGSSIMPHKINPIDFENSEGNLGLSNALMNHMINKLPISRWQRDLSDSTVLRNIGVVFAYSIIAYNSVLLGTNKLTINTSQLLKNLDNNWSVLSEAIQTVMRRYTIENAYEKLKKLTRGKKIEKVDIHKFIDKLNIPKIEKERLKKISPSNYIGAASQIIDEIK.

N(6)-(1,2-dicarboxyethyl)-AMP is bound by residues arginine 15 to tyrosine 16, asparagine 90 to aspartate 92, and threonine 122 to serine 123. The active-site Proton donor/acceptor is histidine 171. Glutamine 247 is a binding site for N(6)-(1,2-dicarboxyethyl)-AMP. Serine 295 acts as the Proton donor/acceptor in catalysis. Residues serine 296, lysine 301 to asparagine 303, asparagine 309, arginine 335, and serine 340 to arginine 344 each bind N(6)-(1,2-dicarboxyethyl)-AMP.

It belongs to the lyase 1 family. Adenylosuccinate lyase subfamily. Homotetramer. Residues from neighboring subunits contribute catalytic and substrate-binding residues to each active site.

The catalysed reaction is N(6)-(1,2-dicarboxyethyl)-AMP = fumarate + AMP. It catalyses the reaction (2S)-2-[5-amino-1-(5-phospho-beta-D-ribosyl)imidazole-4-carboxamido]succinate = 5-amino-1-(5-phospho-beta-D-ribosyl)imidazole-4-carboxamide + fumarate. The protein operates within purine metabolism; AMP biosynthesis via de novo pathway; AMP from IMP: step 2/2. It functions in the pathway purine metabolism; IMP biosynthesis via de novo pathway; 5-amino-1-(5-phospho-D-ribosyl)imidazole-4-carboxamide from 5-amino-1-(5-phospho-D-ribosyl)imidazole-4-carboxylate: step 2/2. Catalyzes two reactions in de novo purine nucleotide biosynthesis. Catalyzes the breakdown of 5-aminoimidazole- (N-succinylocarboxamide) ribotide (SAICAR or 2-[5-amino-1-(5-phospho-beta-D-ribosyl)imidazole-4-carboxamido]succinate) to 5-aminoimidazole-4-carboxamide ribotide (AICAR or 5-amino-1-(5-phospho-beta-D-ribosyl)imidazole-4-carboxamide) and fumarate, and of adenylosuccinate (ADS or N(6)-(1,2-dicarboxyethyl)-AMP) to adenosine monophosphate (AMP) and fumarate. The chain is Adenylosuccinate lyase (purB) from Buchnera aphidicola subsp. Schizaphis graminum (strain Sg).